The sequence spans 795 residues: Delta-1-pyrroline-5-carboxylate synthase (795 aa).

The segment at 1-361 (MLRHMHRSGV…FFSEVKPAGP (361 aa)) is glutamate 5-kinase. Substrate-binding residues include Ser117, Asp223, and Asn246. ATP-binding positions include 266–267 (SD) and 305–311 (LGGMEAK). N6-succinyllysine occurs at positions 311, 347, and 550. The tract at residues 362 to 795 (TVEQQGEMAR…NLPVPQRNFS (434 aa)) is gamma-glutamyl phosphate reductase.

In the N-terminal section; belongs to the glutamate 5-kinase family. The protein in the C-terminal section; belongs to the gamma-glutamyl phosphate reductase family. In terms of assembly, can form homodimers/multimers.

Its subcellular location is the mitochondrion matrix. It carries out the reaction L-glutamate + ATP = L-glutamyl 5-phosphate + ADP. The enzyme catalyses L-glutamate 5-semialdehyde + phosphate + NADP(+) = L-glutamyl 5-phosphate + NADPH + H(+). The protein operates within amino-acid biosynthesis; L-proline biosynthesis; L-glutamate 5-semialdehyde from L-glutamate: step 1/2. It functions in the pathway amino-acid biosynthesis; L-proline biosynthesis; L-glutamate 5-semialdehyde from L-glutamate: step 2/2. Its activity is regulated as follows. Isoform Short: Inhibited by L-ornithine with a Ki of approximately 0.25 mm. Isoform Long: Insensitive to ornithine inhibition. Thus, the two amino acid insert in the long isoform abolishes feedback inhibition of P5CS activity by L-ornithine. In terms of biological role, bifunctional enzyme that converts glutamate to glutamate 5-semialdehyde, an intermediate in the biosynthesis of proline, ornithine and arginine. The protein is Delta-1-pyrroline-5-carboxylate synthase (Aldh18a1) of Mus musculus (Mouse).